Here is a 295-residue protein sequence, read N- to C-terminus: ATP-dependent (S)-NAD(P)H-hydrate dehydratase (295 aa).

Residues 9–289 form the YjeF C-terminal domain; it reads LLERARNLVP…DQIHQVFDDL (281 aa). Residues G109 and 162–168 each bind (6S)-NADPHX; that span reads NAIEFCR. ATP contacts are provided by residues 193–197 and 214–223; these read KGLND and GSGRRCGGQG. D224 provides a ligand contact to (6S)-NADPHX.

This sequence belongs to the NnrD/CARKD family. Mg(2+) is required as a cofactor.

It carries out the reaction (6S)-NADHX + ATP = ADP + phosphate + NADH + H(+). It catalyses the reaction (6S)-NADPHX + ATP = ADP + phosphate + NADPH + H(+). In terms of biological role, catalyzes the dehydration of the S-form of NAD(P)HX at the expense of ATP, which is converted to ADP. Together with NAD(P)HX epimerase, which catalyzes the epimerization of the S- and R-forms, the enzyme allows the repair of both epimers of NAD(P)HX, a damaged form of NAD(P)H that is a result of enzymatic or heat-dependent hydration. This is ATP-dependent (S)-NAD(P)H-hydrate dehydratase from Anopheles darlingi (Mosquito).